The primary structure comprises 239 residues: Ribosomal RNA small subunit methyltransferase G (239 aa).

Residues glycine 78, phenylalanine 83, 129–130 (AE), and arginine 148 contribute to the S-adenosyl-L-methionine site.

Belongs to the methyltransferase superfamily. RNA methyltransferase RsmG family.

Its subcellular location is the cytoplasm. Functionally, specifically methylates the N7 position of a guanine in 16S rRNA. In Alkaliphilus oremlandii (strain OhILAs) (Clostridium oremlandii (strain OhILAs)), this protein is Ribosomal RNA small subunit methyltransferase G.